A 2521-amino-acid polypeptide reads, in one-letter code: Piezo-type mechanosensitive ion channel component 1 (2521 aa).

Over 1 to 12 (MEPHVLGAVLYW) the chain is Cytoplasmic. Residues 13-25 (LLLPCALLAACLL) form a helical membrane-spanning segment. Residues 26 to 28 (RFS) lie on the Extracellular side of the membrane. Residues 29–44 (GLSLVYLLFLLLLPWF) form a helical membrane-spanning segment. The Cytoplasmic portion of the chain corresponds to 45 to 58 (PGPTRCGLQGHTGR). A helical membrane pass occupies residues 59-81 (LLRALLGLSLLFLVAHLALQICL). The Extracellular portion of the chain corresponds to 82-121 (HIVPRLDQLLGPSCSRWETLSRHIGVTRLDLKDIPNAIRL). The helical transmembrane segment at 122–138 (VAPDLGILVVSSVCLGI) threads the bilayer. Residues 139 to 194 (CGRLARNTRQSPHPRELDDDERDVDASPTAGLQEAATLAPTRRSRLAARFRVTAHW) lie on the Cytoplasmic side of the membrane. The helical transmembrane segment at 195–214 (LLVAAGRVLAVTLLALAGIA) threads the bilayer. Over 215–216 (HP) the chain is Extracellular. A helical membrane pass occupies residues 217–236 (SALSSVYLLLFLALCTWWAC). Residues 237–247 (HFPISTRGFSR) lie on the Cytoplasmic side of the membrane. A helical membrane pass occupies residues 248-268 (LCVAVGCFGAGHLICLYCYQM). The Extracellular portion of the chain corresponds to 269-309 (PLAQALLPPAGIWARVLGLKDFVGPTNCSSPHALVLNTGLD). N-linked (GlcNAc...) asparagine glycosylation occurs at Asn295. The helical transmembrane segment at 310-330 (WPVYASPGVLLLLCYATASLR) threads the bilayer. Residues 331-417 (KLRAYRPSGQ…EASPLHSLGH (87 aa)) are Cytoplasmic-facing. A helical transmembrane segment spans residues 418-438 (LIMDQSYVCALIAMMVWSITY). The Extracellular portion of the chain corresponds to 439–440 (HS). Residues 441 to 456 (WLTFVLLLWACLIWTV) form a helical membrane-spanning segment. Residues 457-461 (RSRHQ) lie on the Cytoplasmic side of the membrane. The helical transmembrane segment at 462-484 (LAMLCSPCILLYGMTLCCLRYVW) threads the bilayer. The Extracellular portion of the chain corresponds to 485–512 (AMDLRPELPTTLGPVSLRQLGLEHTRYP). A helical membrane pass occupies residues 513–530 (CLDLGAMLLYTLTFWLLL). The Cytoplasmic portion of the chain corresponds to 531–574 (RQFVKEKLLKWAESPAALTEVTVADTEPTRTQTLLQSLGELVKG). A helical transmembrane segment spans residues 575 to 595 (VYAKYWIYVCAGMFIVVSFAG). Residue Arg596 is a topological domain, extracellular. Residues 597 to 617 (LVVYKIVYMFLFLLCLTLFQV) form a helical membrane-spanning segment. Residues 618–627 (YYSLWRKLLK) lie on the Cytoplasmic side of the membrane. A helical transmembrane segment spans residues 628–649 (AFWWLVVAYTMLVLIAVYTFQF). Residues 650 to 679 (QDFPAYWRNLTGFTDEQLGDLGLEQFSVSE) are Extracellular-facing. A helical transmembrane segment spans residues 680–696 (LFSSILVPGFFLLACIL). The Cytoplasmic portion of the chain corresponds to 697–816 (QLHYFHRPFM…RRLLELHVFK (120 aa)). Thr734 carries the post-translational modification Phosphothreonine. Residues 738–769 (REEQQEHQQQQQEEEEEEEDSRDEGLGVATPH) form a disordered region. The segment covering 749 to 759 (QEEEEEEEDSR) has biased composition (acidic residues). A Phosphoserine modification is found at Ser758. A helical transmembrane segment spans residues 817-828 (LVALYTVWVALK). At 829–831 (EVS) the chain is on the extracellular side. A helical transmembrane segment spans residues 832-845 (VMNLLLVVLWAFAL). Residues 846–859 (PYPRFRPMASCLST) lie on the Cytoplasmic side of the membrane. The chain crosses the membrane as a helical span at residues 860-874 (VWTCVIIVCKMLYQL). The Extracellular segment spans residues 875–926 (KVVNPQEYSSNCTEPFPNSTNLLPTEISQSLLYRGPVDPANWFGVRKGFPNL). Residues 927 to 954 (GYIQNHLQVLLLLVFEAIVYRRQEHYRR) form a helical membrane-spanning segment. The Cytoplasmic segment spans residues 955–994 (QHQLAPLPAQAVFASGTRQQLDQDLLGCLKYFINFFFYKF). A helical membrane pass occupies residues 995-1010 (GLEICFLMAVNVIGQR). Topologically, residues 1011 to 1012 (MN) are extracellular. The helical transmembrane segment at 1013-1028 (FLVTLHGCWLVAILTR) threads the bilayer. The Cytoplasmic segment spans residues 1029–1041 (RHRQAIARLWPNY). A helical transmembrane segment spans residues 1042-1057 (CLFLALFLLYQYLLCL). Residues 1058-1096 (GMPPALCIDYPWRWSRAVPMNSALIKWLYLPDFFRAPNS) are Extracellular-facing. The chain crosses the membrane as a helical span at residues 1097 to 1118 (TNLISDFLLLLCASQQWQVFSA). Over 1119-1153 (ERTEEWQRMAGVNTDRLEPLRGEPNPVPNFIHCRS) the chain is Cytoplasmic. The chain crosses the membrane as a helical span at residues 1154-1180 (YLDMLKVAVFRYLFWLVLVVVFVTGAT). Residues 1181-1185 (RISIF) are Extracellular-facing. A helical membrane pass occupies residues 1186–1204 (GLGYLLACFYLLLFGTALL). The Cytoplasmic segment spans residues 1205–1217 (QRDTRARLVLWDC). Residues 1218 to 1236 (LILYNVTVIISKNMLSLLA) traverse the membrane as a helical segment. Residues 1237 to 1285 (CVFVEQMQTGFCWVIQLFSLVCTVKGYYDPKEMMDRDQDCLLPVEEAGI) are Extracellular-facing. Residues 1286–1302 (IWDSVCFFFLLLQRRVF) form a helical membrane-spanning segment. The Cytoplasmic segment spans residues 1303 to 1656 (LSHYYLHVRA…ELLLDRRLRI (354 aa)). The stretch at 1339-1368 (HRRIEEKSLAQLKRQMERIRAKQEKHRQGR) forms a coiled coil. Disordered regions lie at residues 1356-1402 (RIRA…RRQW), 1462-1498 (RQQEQEQARQEQAGQLPTGGGPSQEVEPAEGPEEAAA), and 1576-1630 (TLPG…DPGE). The span at 1385-1398 (LEPGPDSPGGSSPP) shows a compositional bias: low complexity. Ser1391 and Ser1396 each carry phosphoserine. 2 positions are modified to phosphoserine: Ser1636 and Ser1646. A helical transmembrane segment spans residues 1657–1700 (PELEEAELFAEGQGRALRLLRAVYQCVAAHSELLCYFIIILNHM). Topologically, residues 1701-1704 (VTAS) are extracellular. The chain crosses the membrane as a helical span at residues 1705 to 1720 (AGSLVLPVLVFLWAML). Residues 1721–1728 (SIPRPSKR) lie on the Cytoplasmic side of the membrane. Residues 1729-1747 (FWMTAIVFTEIAVVVKYLF) traverse the membrane as a helical segment. Residues 1748 to 1779 (QFGFFPWNSHVVLRRYENKPYFPPRILGLEKT) are Extracellular-facing. Residues 1780–1801 (DGYIKYDLVQLMALFFHRSQLL) traverse the membrane as a helical segment. Over 1802-1960 (CYGLWDHEED…HTKYRAATDV (159 aa)) the chain is Cytoplasmic. Positions 1811–1822 (DSPSKEHDKSGE) are enriched in basic and acidic residues. The segment at 1811–1921 (DSPSKEHDKS…RPSRSGGRVR (111 aa)) is disordered. The residue at position 1854 (Thr1854) is a Phosphothreonine. Residues 1859-1868 (VELRPRDTRR) are compositionally biased toward basic and acidic residues. Residues 1869–1878 (ISLRFRRRKK) show a composition bias toward basic residues. A compositionally biased stretch (acidic residues) spans 1890 to 1903 (EAEDREEEEGEEEK). Residues 1904–1913 (EAPTGREKRP) are compositionally biased toward basic and acidic residues. Residues 1961–1980 (YALMFLADVVDFIIIIFGFW) form a helical membrane-spanning segment. Over 1981–2000 (AFGKHSAATDITSSLSDDQV) the chain is Extracellular. A helical membrane pass occupies residues 2001-2017 (PEAFLVMLLIQFSTMVV). Residues 2018 to 2031 (DRALYLRKTVLGKL) are Cytoplasmic-facing. The helical transmembrane segment at 2032–2052 (AFQVALVLAIHLWMFFILPAV) threads the bilayer. Residues 2053–2060 (TERMFNQN) lie on the Extracellular side of the membrane. Residues 2061–2076 (VVAQLWYFVKCIYFAL) traverse the membrane as a helical segment. Over 2077-2176 (SAYQIRCGYP…KKKIVKYGMG (100 aa)) the chain is Cytoplasmic. Residues 2177–2197 (GLIILFLIAIIWFPLLFMSLV) form a helical membrane-spanning segment. Topologically, residues 2198–2431 (RSVVGVVNQP…IFSDKVSPPS (234 aa)) are extracellular. Asn2294 carries N-linked (GlcNAc...) asparagine glycosylation. Cys2411 and Cys2415 are disulfide-bonded. The helical transmembrane segment at 2432–2452 (LGFLAGYGIMGLYVSIVLVIG) threads the bilayer. Residues 2453-2521 (KFVRGFFSEI…TMIKWTREKE (69 aa)) lie on the Cytoplasmic side of the membrane.

It belongs to the PIEZO (TC 1.A.75) family. In terms of assembly, homotrimer; the homotrimer forms a propeller-shaped Piezo channel with a cation-ion conducting pore. Heterotrimeric interaction may occur between PIEZO1 and PIEZO2. Interacts with PKD2. Interacts with STOML3. Interacts with TMC1, TMC2, PCDH15 and CIB2; the interaction may be part of the MET complex. Interacts with MDFIC (via C-terminus); the interaction prolongs Piezo channel inactivation. Interacts with MDFI (via C-terminus); the interaction prolongs Piezo channel inactivation. In terms of tissue distribution, expressed in numerous tissues. In normal brain, expressed exclusively in neurons, not in astrocytes. In Alzheimer disease brains, expressed in about half of the activated astrocytes located around classical senile plaques. In Parkinson disease substantia nigra, not detected in melanin-containing neurons nor in activated astrocytes. Expressed in erythrocytes (at protein level). Expressed in myoblasts (at protein level).

Its subcellular location is the endoplasmic reticulum membrane. The protein resides in the endoplasmic reticulum-Golgi intermediate compartment membrane. It is found in the cell membrane. It localises to the cell projection. The protein localises to the lamellipodium membrane. The catalysed reaction is K(+)(in) = K(+)(out). It carries out the reaction Na(+)(in) = Na(+)(out). It catalyses the reaction Ca(2+)(in) = Ca(2+)(out). The enzyme catalyses Mg(2+)(in) = Mg(2+)(out). Its activity is regulated as follows. Regulated by auxillary subunits MDFIC and MDFI. Down-regulated by phosphatidylserines exposed on the cell surface. Divalent ions decrease the single-channel permeability of K(+). Functionally, pore-forming subunit of the mechanosensitive non-specific cation Piezo channel required for rapidly adapting mechanically activated (MA) currents and has a key role in sensing touch and tactile pain. Piezo channels are homotrimeric three-blade propeller-shaped structures that utilize a cap-motion and plug-and-latch mechanism to gate their ion-conducting pathways. Generates currents characterized by a linear current-voltage relationship that are sensitive to ruthenium red and gadolinium. Conductance to monovalent alkali ions is highest for K(+), intermediate for Na(+) and lowest for Li(+). Divalent ions except for Mn(2+) permeate the channel but more slowly than the monovalent ions and they also reduce K(+) currents. Plays a key role in epithelial cell adhesion by maintaining integrin activation through R-Ras recruitment to the ER, most probably in its activated state, and subsequent stimulation of calpain signaling. In inner ear hair cells, PIEZO1/2 subunits may constitute part of the mechanotransducer (MET) non-selective cation channel complex where they may act as pore-forming ion-conducting component in the complex. In the kidney, may contribute to the detection of intraluminal pressure changes and to urine flow sensing. Acts as a shear-stress sensor that promotes endothelial cell organization and alignment in the direction of blood flow through calpain activation. Plays a key role in blood vessel formation and vascular structure in both development and adult physiology. Acts as a sensor of phosphatidylserine (PS) flipping at the plasma membrane and governs morphogenesis of muscle cells. In myoblasts, flippase-mediated PS enrichment at the inner leaflet of plasma membrane triggers channel activation and Ca2+ influx followed by Rho GTPases signal transduction, leading to assembly of cortical actomyosin fibers and myotube formation. This Homo sapiens (Human) protein is Piezo-type mechanosensitive ion channel component 1.